Here is a 275-residue protein sequence, read N- to C-terminus: Dermonecrotic toxin SpaSicTox-betaIIA1 (275 aa).

The active site involves His5. Positions 25 and 27 each coordinate Mg(2+). His41 acts as the Nucleophile in catalysis. Disulfide bonds link Cys45/Cys51 and Cys47/Cys190. A Mg(2+)-binding site is contributed by Asp85.

This sequence belongs to the arthropod phospholipase D family. Class II subfamily. Requires Mg(2+) as cofactor. In terms of tissue distribution, expressed by the venom gland.

It localises to the secreted. It carries out the reaction an N-(acyl)-sphingosylphosphocholine = an N-(acyl)-sphingosyl-1,3-cyclic phosphate + choline. It catalyses the reaction an N-(acyl)-sphingosylphosphoethanolamine = an N-(acyl)-sphingosyl-1,3-cyclic phosphate + ethanolamine. The catalysed reaction is a 1-acyl-sn-glycero-3-phosphocholine = a 1-acyl-sn-glycero-2,3-cyclic phosphate + choline. The enzyme catalyses a 1-acyl-sn-glycero-3-phosphoethanolamine = a 1-acyl-sn-glycero-2,3-cyclic phosphate + ethanolamine. Dermonecrotic toxins cleave the phosphodiester linkage between the phosphate and headgroup of certain phospholipids (sphingolipid and lysolipid substrates), forming an alcohol (often choline) and a cyclic phosphate. This toxin acts on sphingomyelin (SM). It may also act on ceramide phosphoethanolamine (CPE), lysophosphatidylcholine (LPC) and lysophosphatidylethanolamine (LPE), but not on lysophosphatidylserine (LPS), and lysophosphatidylglycerol (LPG). It acts by transphosphatidylation, releasing exclusively cyclic phosphate products as second products. Induces dermonecrosis, hemolysis, increased vascular permeability, edema, inflammatory response, and platelet aggregation. The sequence is that of Dermonecrotic toxin SpaSicTox-betaIIA1 from Sicarius patagonicus (Six-eyed sand spider).